The sequence spans 592 residues: Aspartate--tRNA ligase (592 aa).

Glu-171 provides a ligand contact to L-aspartate. The tract at residues Gln-195–Lys-198 is aspartate. An L-aspartate-binding site is contributed by Arg-217. Residues Arg-217 to Glu-219 and Gln-226 each bind ATP. His-448 contacts L-aspartate. Glu-482 serves as a coordination point for ATP. Residue Arg-489 participates in L-aspartate binding. Position 534–537 (Gly-534–Arg-537) interacts with ATP.

Belongs to the class-II aminoacyl-tRNA synthetase family. Type 1 subfamily. In terms of assembly, homodimer.

It is found in the cytoplasm. It carries out the reaction tRNA(Asp) + L-aspartate + ATP = L-aspartyl-tRNA(Asp) + AMP + diphosphate. Functionally, catalyzes the attachment of L-aspartate to tRNA(Asp) in a two-step reaction: L-aspartate is first activated by ATP to form Asp-AMP and then transferred to the acceptor end of tRNA(Asp). In Vibrio atlanticus (strain LGP32) (Vibrio splendidus (strain Mel32)), this protein is Aspartate--tRNA ligase.